A 269-amino-acid polypeptide reads, in one-letter code: Ribosomal RNA small subunit methyltransferase J (269 aa).

Residues 125–126 and D179 each bind S-adenosyl-L-methionine; that span reads ER.

Belongs to the methyltransferase superfamily. RsmJ family.

Its subcellular location is the cytoplasm. The enzyme catalyses guanosine(1516) in 16S rRNA + S-adenosyl-L-methionine = N(2)-methylguanosine(1516) in 16S rRNA + S-adenosyl-L-homocysteine + H(+). Functionally, specifically methylates the guanosine in position 1516 of 16S rRNA. In Pseudomonas syringae pv. tomato (strain ATCC BAA-871 / DC3000), this protein is Ribosomal RNA small subunit methyltransferase J.